The chain runs to 342 residues: N-acetyl-gamma-glutamyl-phosphate reductase (342 aa).

The active site involves Cys-146.

It belongs to the NAGSA dehydrogenase family. Type 1 subfamily.

It is found in the cytoplasm. The enzyme catalyses N-acetyl-L-glutamate 5-semialdehyde + phosphate + NADP(+) = N-acetyl-L-glutamyl 5-phosphate + NADPH + H(+). It functions in the pathway amino-acid biosynthesis; L-arginine biosynthesis; N(2)-acetyl-L-ornithine from L-glutamate: step 3/4. Functionally, catalyzes the NADPH-dependent reduction of N-acetyl-5-glutamyl phosphate to yield N-acetyl-L-glutamate 5-semialdehyde. This chain is N-acetyl-gamma-glutamyl-phosphate reductase, found in Streptomyces coelicolor (strain ATCC BAA-471 / A3(2) / M145).